The chain runs to 310 residues: N-acetyl-gamma-glutamyl-phosphate reductase (310 aa).

The active site involves Cys-117.

This sequence belongs to the NAGSA dehydrogenase family. Type 2 subfamily.

Its subcellular location is the cytoplasm. It carries out the reaction N-acetyl-L-glutamate 5-semialdehyde + phosphate + NADP(+) = N-acetyl-L-glutamyl 5-phosphate + NADPH + H(+). The protein operates within amino-acid biosynthesis; L-arginine biosynthesis; N(2)-acetyl-L-ornithine from L-glutamate: step 3/4. Its function is as follows. Catalyzes the NADPH-dependent reduction of N-acetyl-5-glutamyl phosphate to yield N-acetyl-L-glutamate 5-semialdehyde. This Rhizobium meliloti (strain 1021) (Ensifer meliloti) protein is N-acetyl-gamma-glutamyl-phosphate reductase.